Here is a 715-residue protein sequence, read N- to C-terminus: Methionine--tRNA ligase (715 aa).

The short motif at 17 to 27 is the 'HIGH' region element; sequence PYANGPIHLGH. Zn(2+)-binding residues include C148, C151, C161, and C164. Residues 359–363 carry the 'KMSKS' region motif; sequence KMSKS. K362 serves as a coordination point for ATP. Positions 614-715 constitute a tRNA-binding domain; it reads DLSKVELRVG…KDAKPGDRLK (102 aa).

Belongs to the class-I aminoacyl-tRNA synthetase family. MetG type 1 subfamily. As to quaternary structure, homodimer. Zn(2+) serves as cofactor.

It is found in the cytoplasm. It catalyses the reaction tRNA(Met) + L-methionine + ATP = L-methionyl-tRNA(Met) + AMP + diphosphate. Functionally, is required not only for elongation of protein synthesis but also for the initiation of all mRNA translation through initiator tRNA(fMet) aminoacylation. This is Methionine--tRNA ligase from Leptospira interrogans serogroup Icterohaemorrhagiae serovar copenhageni (strain Fiocruz L1-130).